We begin with the raw amino-acid sequence, 188 residues long: Elongation factor P (188 aa).

Lysine 34 is modified (N6-(3,6-diaminohexanoyl)-5-hydroxylysine).

This sequence belongs to the elongation factor P family. May be beta-lysylated on the epsilon-amino group of Lys-34 by the combined action of EpmA and EpmB, and then hydroxylated on the C5 position of the same residue by EpmC (if this protein is present). Lysylation is critical for the stimulatory effect of EF-P on peptide-bond formation. The lysylation moiety may extend toward the peptidyltransferase center and stabilize the terminal 3-CCA end of the tRNA. Hydroxylation of the C5 position on Lys-34 may allow additional potential stabilizing hydrogen-bond interactions with the P-tRNA.

It localises to the cytoplasm. It functions in the pathway protein biosynthesis; polypeptide chain elongation. Functionally, involved in peptide bond synthesis. Alleviates ribosome stalling that occurs when 3 or more consecutive Pro residues or the sequence PPG is present in a protein, possibly by augmenting the peptidyl transferase activity of the ribosome. Modification of Lys-34 is required for alleviation. This Xanthomonas campestris pv. campestris (strain B100) protein is Elongation factor P.